The chain runs to 1465 residues: DNA polymerase III PolC-type (1465 aa).

An Exonuclease domain is found at 427-583 (YVVFDVETTG…YDAEATGRLL (157 aa)).

Belongs to the DNA polymerase type-C family. PolC subfamily.

The protein localises to the cytoplasm. It catalyses the reaction DNA(n) + a 2'-deoxyribonucleoside 5'-triphosphate = DNA(n+1) + diphosphate. Required for replicative DNA synthesis. This DNA polymerase also exhibits 3' to 5' exonuclease activity. This Streptococcus pyogenes serotype M12 (strain MGAS2096) protein is DNA polymerase III PolC-type.